The chain runs to 593 residues: Chromosomal replication initiator protein DnaA (593 aa).

The domain I, interacts with DnaA modulators stretch occupies residues 1–71 (MSDPCWEQCV…EIISNSDAGP (71 aa)). Residues 71 to 256 (PKSLEIAVAQ…DVEGGIQHKH (186 aa)) form a domain II region. Residues 97–186 (AVPVPDPLPS…STESSADRER (90 aa)) are disordered. Residues 113–124 (SFQPPKGNTSAD) are compositionally biased toward polar residues. Positions 257–473 (NLNTTFIFDN…GALKRVIANA (217 aa)) are domain III, AAA+ region. Residues glycine 301, glycine 303, lysine 304, and threonine 305 each coordinate ATP. The segment at 474-593 (QFTQRSISVE…VKNLLRTLTT (120 aa)) is domain IV, binds dsDNA.

It belongs to the DnaA family. As to quaternary structure, oligomerizes as a right-handed, spiral filament on DNA at oriC.

It localises to the cytoplasm. Its function is as follows. Plays an essential role in the initiation and regulation of chromosomal replication. ATP-DnaA binds to the origin of replication (oriC) to initiate formation of the DNA replication initiation complex once per cell cycle. Binds the DnaA box (a 9 base pair repeat at the origin) and separates the double-stranded (ds)DNA. Forms a right-handed helical filament on oriC DNA; dsDNA binds to the exterior of the filament while single-stranded (ss)DNA is stabiized in the filament's interior. The ATP-DnaA-oriC complex binds and stabilizes one strand of the AT-rich DNA unwinding element (DUE), permitting loading of DNA polymerase. After initiation quickly degrades to an ADP-DnaA complex that is not apt for DNA replication. Binds acidic phospholipids. The sequence is that of Chromosomal replication initiator protein DnaA from Teredinibacter turnerae (strain ATCC 39867 / T7901).